A 508-amino-acid chain; its full sequence is Citrate lyase alpha chain (508 aa).

In terms of assembly, oligomer with a subunit composition of (alpha,beta,gamma)6.

The protein localises to the cytoplasm. It catalyses the reaction citrate = oxaloacetate + acetate. It carries out the reaction citrate + acetyl-CoA = (3S)-citryl-CoA + acetate. Functionally, represents a citrate:acetyl-ACP transferase. The protein is Citrate lyase alpha chain (citF) of Klebsiella pneumoniae.